The following is a 439-amino-acid chain: MSKTMAMNLLEDWCRGMEVDIHRSLLVTGIPEDCGQAEIEETLNGVLAPLGPYRVLNKIFVREENVKAALIEVGEGVNLSTIPREFPGRGGVWRVVCRDPTQDAEFLKNLNEFLDAEGRTWEDVVRLLQLNHPTLSQNQHQPPENWAEALGVLLGAVVQIIFCMDAEIRSREEARAQEAAEFEEMAAWALAAGKKVKKEPGLAAEVGSALKAETPNNWNATEDQHDPPKPLVRRAGAKSRSRRKKQKKNPKQEAVPWKKPKGINSSSTANLEDPEVGDAESMAISEPIKGSRKPCVKQEELALKKPMAKCAWKGPREPPQDAQAEAESPGGASESDQDGGHESPPKKKAMAWVSAKNPAPMRKKKKVSLGPVSYVLVDSEDGRKKPVMPKKGPGSRREASVQKAPQGQQPAEATASTSRGPRAKPEGSPRRATNESRKV.

The tract at residues 213–439 (ETPNNWNATE…RRATNESRKV (227 aa)) is disordered. A compositionally biased stretch (basic residues) spans 231–249 (LVRRAGAKSRSRRKKQKKN). Residues 403-419 (KAPQGQQPAEATASTSR) are compositionally biased toward polar residues. The span at 423–439 (AKPEGSPRRATNESRKV) shows a compositional bias: basic and acidic residues.

Belongs to the PNMA family.

This Pongo abelii (Sumatran orangutan) protein is Paraneoplastic antigen-like protein 8A (PNMA8A).